We begin with the raw amino-acid sequence, 385 residues long: Glucans biosynthesis protein C (385 aa).

Transmembrane regions (helical) follow at residues 17–37, 60–80, 91–111, 137–157, 173–193, 212–232, 239–259, 274–294, 311–331, and 338–358; these read AWLM…SHTW, MQVF…RYPL, VGIP…IMLQ, ISHL…VWIF, KFSM…YAVI, FIVM…LAFI, LFTT…VAYL, TESV…FSFG, ASLF…AYIT, and WLGF…LYEI.

Belongs to the acyltransferase 3 family. OpgC subfamily.

It is found in the cell membrane. It functions in the pathway glycan metabolism; osmoregulated periplasmic glucan (OPG) biosynthesis. In terms of biological role, necessary for the succinyl substitution of periplasmic glucans. Could catalyze the transfer of succinyl residues from the cytoplasmic side of the membrane to the nascent glucan backbones on the periplasmic side of the membrane. The chain is Glucans biosynthesis protein C from Shigella dysenteriae serotype 1 (strain Sd197).